The following is a 262-amino-acid chain: Snake venom serine proteinase 9 (262 aa).

The N-terminal stretch at 1–18 (MVLIRVLANLLILQLSYA) is a signal peptide. Residues 19 to 24 (QKSSEL) constitute a propeptide that is removed on maturation. One can recognise a Peptidase S1 domain in the interval 25–253 (VIGGDECNID…HLDWIQSIIA (229 aa)). Cystine bridges form between cysteine 31–cysteine 165, cysteine 52–cysteine 68, cysteine 144–cysteine 214, cysteine 176–cysteine 193, and cysteine 204–cysteine 229. Histidine 67 functions as the Charge relay system in the catalytic mechanism. An N-linked (GlcNAc...) asparagine glycan is attached at asparagine 105. The active-site Charge relay system is the aspartate 112. Serine 208 acts as the Charge relay system in catalysis.

This sequence belongs to the peptidase S1 family. Snake venom subfamily. Monomer. Expressed by the venom gland.

Its subcellular location is the secreted. Snake venom serine protease that may act in the hemostasis system of the prey. The polypeptide is Snake venom serine proteinase 9 (Crotalus adamanteus (Eastern diamondback rattlesnake)).